Here is a 183-residue protein sequence, read N- to C-terminus: Ribosome rescue factor SmrB (183 aa).

In terms of domain architecture, Smr spans Leu98 to Glu173.

Belongs to the SmrB family. In terms of assembly, associates with collided ribosomes, but not with correctly translating polysomes.

Its function is as follows. Acts as a ribosome collision sensor. Detects stalled/collided disomes (pairs of ribosomes where the leading ribosome is stalled and a second ribosome has collided with it) and endonucleolytically cleaves mRNA at the 5' boundary of the stalled ribosome. Stalled/collided disomes form a new interface (primarily via the 30S subunits) that binds SmrB. Cleaved mRNA becomes available for tmRNA ligation, leading to ribosomal subunit dissociation and rescue of stalled ribosomes. In Escherichia fergusonii (strain ATCC 35469 / DSM 13698 / CCUG 18766 / IAM 14443 / JCM 21226 / LMG 7866 / NBRC 102419 / NCTC 12128 / CDC 0568-73), this protein is Ribosome rescue factor SmrB.